The sequence spans 138 residues: Probable histone H2AXb (138 aa).

Residues Met-1–Arg-10 show a composition bias toward gly residues. Residues Met-1–Lys-24 form a disordered region. Residue Ser-135 is modified to Phosphoserine; by ATM and ATR. The short motif at Ser-135–Gln-136 is the [ST]-Q motif element.

It belongs to the histone H2A family. As to quaternary structure, the nucleosome is a histone octamer containing two molecules each of H2A, H2B, H3 and H4 assembled in one H3-H4 heterotetramer and two H2A-H2B heterodimers. The octamer wraps approximately 147 bp of DNA. Interacts with numerous proteins required for DNA damage signaling and repair when phosphorylated on Ser-135. Post-translationally, phosphorylated to form H2AXS139ph (gamma-H2AX) in response to DNA double strand breaks (DSBs) generated by exogenous genotoxic agents and by stalled replication forks, and may also occur during meiotic recombination events. Phosphorylation can extend up to several thousand nucleosomes from the actual site of the DSB and may mark the surrounding chromatin for recruitment of proteins required for DNA damage signaling and repair. Widespread phosphorylation may also serve to amplify the damage signal or aid repair of persistent lesions. H2AXS139ph in response to ionizing radiation is mediated by ATM while defects in DNA replication induce H2AXS139ph subsequent to activation of ATR. Dephosphorylation of H2AXS139ph by PP2A is required for DNA DSB repair.

The protein resides in the nucleus. Its subcellular location is the chromosome. Variant histone H2A which replaces conventional H2A in a subset of nucleosomes. Nucleosomes wrap and compact DNA into chromatin, limiting DNA accessibility to the cellular machineries which require DNA as a template. Histones thereby play a central role in transcription regulation, DNA repair, DNA replication and chromosomal stability. DNA accessibility is regulated via a complex set of post-translational modifications of histones, also called histone code, and nucleosome remodeling. Required for checkpoint-mediated arrest of cell cycle progression in response to low doses of ionizing radiation and for efficient repair of DNA double strand breaks (DSBs) specifically when modified by C-terminal phosphorylation. This is Probable histone H2AXb from Oryza sativa subsp. indica (Rice).